The primary structure comprises 430 residues: Phosphomethylpyrimidine synthase (430 aa).

Substrate-binding positions include Asn67, Met96, Tyr125, His161, 183 to 185, 224 to 227, and Glu263; these read SRG and DALR. His267 serves as a coordination point for Zn(2+). Residue Tyr290 coordinates substrate. Residue His331 participates in Zn(2+) binding. [4Fe-4S] cluster-binding residues include Cys406, Cys409, and Cys413.

Belongs to the ThiC family. In terms of assembly, homodimer. Requires [4Fe-4S] cluster as cofactor.

The enzyme catalyses 5-amino-1-(5-phospho-beta-D-ribosyl)imidazole + S-adenosyl-L-methionine = 4-amino-2-methyl-5-(phosphooxymethyl)pyrimidine + CO + 5'-deoxyadenosine + formate + L-methionine + 3 H(+). Its pathway is cofactor biosynthesis; thiamine diphosphate biosynthesis. In terms of biological role, catalyzes the synthesis of the hydroxymethylpyrimidine phosphate (HMP-P) moiety of thiamine from aminoimidazole ribotide (AIR) in a radical S-adenosyl-L-methionine (SAM)-dependent reaction. The polypeptide is Phosphomethylpyrimidine synthase (Campylobacter jejuni subsp. jejuni serotype O:23/36 (strain 81-176)).